A 473-amino-acid chain; its full sequence is Photosystem II CP43 reaction center protein (473 aa).

Positions 1–14 (MKTLYSLRRFYPVE) are excised as a propeptide. Thr-15 is modified (N-acetylthreonine). The residue at position 15 (Thr-15) is a Phosphothreonine. Helical transmembrane passes span 69–93 (LFEVAHFVPEKPMYEQGLILLPHLA), 134–155 (LLGPETLEESFPFFGYVWKDRN), 178–200 (KALYFGGVYDTWAPGGGDVRKIT), 255–275 (KPFAWARRAFVWSGEAYLSYS), and 291–312 (WFNNTAYPSEFYGPTGPEASQA). [CaMn4O5] cluster is bound at residue Glu-367. Residues 447-471 (RARAAAAGFEKGIDRDLEPVLSMTP) traverse the membrane as a helical segment.

This sequence belongs to the PsbB/PsbC family. PsbC subfamily. In terms of assembly, PSII is composed of 1 copy each of membrane proteins PsbA, PsbB, PsbC, PsbD, PsbE, PsbF, PsbH, PsbI, PsbJ, PsbK, PsbL, PsbM, PsbT, PsbX, PsbY, PsbZ, Psb30/Ycf12, at least 3 peripheral proteins of the oxygen-evolving complex and a large number of cofactors. It forms dimeric complexes. Requires Binds multiple chlorophylls and provides some of the ligands for the Ca-4Mn-5O cluster of the oxygen-evolving complex. It may also provide a ligand for a Cl- that is required for oxygen evolution. PSII binds additional chlorophylls, carotenoids and specific lipids. as cofactor.

Its subcellular location is the plastid. It is found in the chloroplast thylakoid membrane. In terms of biological role, one of the components of the core complex of photosystem II (PSII). It binds chlorophyll and helps catalyze the primary light-induced photochemical processes of PSII. PSII is a light-driven water:plastoquinone oxidoreductase, using light energy to abstract electrons from H(2)O, generating O(2) and a proton gradient subsequently used for ATP formation. The sequence is that of Photosystem II CP43 reaction center protein from Acorus calamus var. americanus (American sweet flag).